Reading from the N-terminus, the 324-residue chain is Stomatin-like protein stl-1 (324 aa).

Belongs to the band 7/mec-2 family. Widely expressed in most tissues, including body wall muscles, intestinal epithelia, and pharynx and head neurons.

The protein localises to the mitochondrion. Mitochondrial protein that probably regulates the biogenesis and the activity of mitochondria. In neurons, involved in mitochondrial fusion and recovery of normal locomotory behavior during reoxygenation; probably acts independently of egl-9 and the canonical hypoxia response pathway. The sequence is that of Stomatin-like protein stl-1 from Caenorhabditis elegans.